A 358-amino-acid chain; its full sequence is Serine/threonine-protein phosphatase 2A activator (358 aa).

Residues 1–20 (MAEGERQPPPDSSEEAPPAT) are disordered. A2 bears the N-acetylalanine mark. 3 residues coordinate ATP: R183, T188, and G189. The Mg(2+) site is built by G243 and D249. Positions 339, 342, and 343 each coordinate ATP.

The protein belongs to the PTPA-type PPIase family. Associates with PP2A heterodimeric core enzyme PP2A(D), composed of a 36 kDa catalytic subunit (subunit C) and a 65 kDa constant regulatory subunit (PR65 or subunit A). Interacts with the catalytic subunit PPP2CA (via C-terminus). Interacts with PPP2CB. In terms of tissue distribution, widely expressed.

Its subcellular location is the cytoplasm. The protein localises to the nucleus. The enzyme catalyses [protein]-peptidylproline (omega=180) = [protein]-peptidylproline (omega=0). Its function is as follows. PPIases accelerate the folding of proteins. It catalyzes the cis-trans isomerization of proline imidic peptide bonds in oligopeptides. Acts as a regulatory subunit for serine/threonine-protein phosphatase 2A (PP2A). Modulates PP2A activity or substrate specificity, probably by inducing a conformational change in the catalytic subunit, a proposed direct target of the PPIase. Can reactivate inactive phosphatase PP2A-phosphatase methylesterase complexes (PP2A(i)) in presence of ATP and Mg(2+). Reversibly stimulates the variable phosphotyrosyl phosphatase activity of PP2A core heterodimer PP2A(D) in presence of ATP and Mg(2+) (in vitro). The phosphotyrosyl phosphatase activity is dependent of an ATPase activity of the PP2A(D):PPP2R4 complex. Is involved in apoptosis; the function appears to be independent from PP2A. This is Serine/threonine-protein phosphatase 2A activator from Homo sapiens (Human).